Consider the following 1075-residue polypeptide: DNA-directed RNA polymerase subunit beta (1075 aa).

The protein belongs to the RNA polymerase beta chain family. As to quaternary structure, in plastids the minimal PEP RNA polymerase catalytic core is composed of four subunits: alpha, beta, beta', and beta''. When a (nuclear-encoded) sigma factor is associated with the core the holoenzyme is formed, which can initiate transcription.

Its subcellular location is the plastid. The protein resides in the chloroplast. It catalyses the reaction RNA(n) + a ribonucleoside 5'-triphosphate = RNA(n+1) + diphosphate. Functionally, DNA-dependent RNA polymerase catalyzes the transcription of DNA into RNA using the four ribonucleoside triphosphates as substrates. The protein is DNA-directed RNA polymerase subunit beta of Saccharum officinarum (Sugarcane).